A 352-amino-acid chain; its full sequence is Putative GATA transcription factor 22 (352 aa).

The tract at residues 27–53 (SLHHHLQQQQQQQQHFHHQASSNPSSL) is disordered. Positions 33–53 (QQQQQQQQHFHHQASSNPSSL) are enriched in low complexity. The Nuclear localization signal motif lies at 112–119 (PKKETRLK). The disordered stretch occupies residues 163–189 (AIITTSDSSKQHTNNDQSSNLSNSERQ). Positions 165 to 189 (ITTSDSSKQHTNNDQSSNLSNSERQ) are enriched in polar residues. Residues 195-249 (DCVIRICSDCNTTKTPLWRSGPRGPKSLCNACGIRQRKARRAAMATATATAVSGV) form a GATA-type zinc finger.

It belongs to the type IV zinc-finger family. Class B subfamily. Forms heterodimers with GATA18. In terms of tissue distribution, expressed predominantly in leaves, and barely in stems, flowers and siliques.

Its subcellular location is the nucleus. Transcriptional regulator that specifically binds 5'-GATA-3' or 5'-GAT-3' motifs within gene promoters. Involved in the modulation of chloroplast development, growth and division in a cytokinin-dependent manner. Repressor of the gibberellic acid (GA) signaling pathway that regulates flowering and modulates greening, in a SOC1-dependent manner. Prevents the accumulation of SOC1 during flowering. Promotes chlorophyll biosynthesis throughout the plant, by regulating chlorophyll biosynthetic genes (e.g. HEMA1 and GUN4) and chloroplast localized glutamate synthase (e.g. GLU1). Involved in the regulation of sugar-sensing genes (e.g. HXK1, HXK2, STP13 and PLT6). Regulator of germination, senescence, elongation growth and flowering time. Influences also leaf starch content. The chain is Putative GATA transcription factor 22 from Arabidopsis thaliana (Mouse-ear cress).